Here is a 389-residue protein sequence, read N- to C-terminus: Aromatic-amino-acid aminotransferase 2 (389 aa).

K233 carries the N6-(pyridoxal phosphate)lysine modification.

The protein belongs to the class-I pyridoxal-phosphate-dependent aminotransferase family. Homodimer. The cofactor is pyridoxal 5'-phosphate.

The enzyme catalyses an aromatic L-alpha-amino acid + 2-oxoglutarate = an aromatic oxo-acid + L-glutamate. In terms of biological role, catalyzes the transamination of phenylalanine, tyrosine and tryptophan. Shows virtually no activity towards aspartic acid, alanine, valine or isoleucine. The chain is Aromatic-amino-acid aminotransferase 2 from Thermococcus litoralis (strain ATCC 51850 / DSM 5473 / JCM 8560 / NS-C).